The primary structure comprises 195 residues: ATP-dependent Clp protease proteolytic subunit (195 aa).

Catalysis depends on serine 97, which acts as the Nucleophile. Residue histidine 122 is part of the active site.

Belongs to the peptidase S14 family. As to quaternary structure, fourteen ClpP subunits assemble into 2 heptameric rings which stack back to back to give a disk-like structure with a central cavity, resembling the structure of eukaryotic proteasomes.

It is found in the cytoplasm. The enzyme catalyses Hydrolysis of proteins to small peptides in the presence of ATP and magnesium. alpha-casein is the usual test substrate. In the absence of ATP, only oligopeptides shorter than five residues are hydrolyzed (such as succinyl-Leu-Tyr-|-NHMec, and Leu-Tyr-Leu-|-Tyr-Trp, in which cleavage of the -Tyr-|-Leu- and -Tyr-|-Trp bonds also occurs).. Cleaves peptides in various proteins in a process that requires ATP hydrolysis. Has a chymotrypsin-like activity. Plays a major role in the degradation of misfolded proteins. The chain is ATP-dependent Clp protease proteolytic subunit from Lactobacillus acidophilus (strain ATCC 700396 / NCK56 / N2 / NCFM).